Here is a 159-residue protein sequence, read N- to C-terminus: Transcription antitermination protein NusB (159 aa).

Residues 1 to 20 (MNKNTQGKPSGKPVRRDGVD) form a disordered region.

Belongs to the NusB family.

Its function is as follows. Involved in transcription antitermination. Required for transcription of ribosomal RNA (rRNA) genes. Binds specifically to the boxA antiterminator sequence of the ribosomal RNA (rrn) operons. The chain is Transcription antitermination protein NusB from Stenotrophomonas maltophilia (strain R551-3).